Consider the following 141-residue polypeptide: Hemoglobin subunit alpha-D (141 aa).

Residues Met1–Arg141 enclose the Globin domain. His58 and His87 together coordinate heme b.

This sequence belongs to the globin family. Heterotetramer of two alpha-D chains and two beta chains. Red blood cells.

Involved in oxygen transport from the lung to the various peripheral tissues. The chain is Hemoglobin subunit alpha-D (HBAD) from Struthio camelus (Common ostrich).